Here is a 124-residue protein sequence, read N- to C-terminus: Succinate dehydrogenase cytochrome b556 subunit (124 aa).

The Cytoplasmic portion of the chain corresponds to 1–29 (MTKIKQEIYNKRPTSPHLTIYKPQISSTL). The chain crosses the membrane as a helical span at residues 30 to 55 (SILHRMTGVALFFVVSILVWWLILSK). Residues 56-67 (YDNNYLQLARCC) lie on the Periplasmic side of the membrane. A helical membrane pass occupies residues 68–88 (IIKICLVAFSYAWCYHLCNGI). Histidine 83 lines the heme pocket. Topologically, residues 89-103 (RHLFWDIGYGFSIRA) are cytoplasmic. A helical membrane pass occupies residues 104–124 (VNITGWCVVVCSILLTMLLWV).

It belongs to the cytochrome b560 family. As to quaternary structure, part of an enzyme complex containing four subunits: a flavoprotein, an iron-sulfur protein, plus two membrane-anchoring proteins, SdhC and SdhD. The complex can form homotrimers. The cofactor is heme.

It localises to the cell inner membrane. It functions in the pathway carbohydrate metabolism; tricarboxylic acid cycle. In terms of biological role, membrane-anchoring subunit of succinate dehydrogenase (SDH). The polypeptide is Succinate dehydrogenase cytochrome b556 subunit (sdhC) (Rickettsia typhi (strain ATCC VR-144 / Wilmington)).